Reading from the N-terminus, the 374-residue chain is MANEVIKCKAAVAWEAGKPLSIEEIEVAPPKAHEVRIKIIATAVCHTDAYTLSGADPEGCFPVILGHEGAGIVESVGEGVTKLKAGDTVIPLYIPQCGECKFCLNPKTNLCQKIRVTQGKGLMPDGTSRFTCKGKTILHYMGTSTFSEYTVVADISVAKIDPLAPLDKVCLLGCGISTGYGAAVNTAKLEPGSVCAVFGLGGVGLAVIMGCKVAGASRIIGVDINKDKFARAKEFGATECINPQDFSKPIQEVLIEMTDGGVDYSFECIGNVKVMRAALEACHKGWGVSVVVGVAASGEEIATRPFQLVTGRTWKGTAFGGWKSVESVPKLVSEYMSKKIKVDEFVTHNLSFDEINKAFELMHSGKSIRTVVKI.

A2 carries the post-translational modification N-acetylalanine. The Zn(2+) site is built by C45, H67, C97, C100, C103, C111, and C174. At K233 the chain carries N6-succinyllysine. S247 is modified (phosphoserine). K315 bears the N6-succinyllysine mark. 2 positions are modified to phosphoserine: S324 and S351.

It belongs to the zinc-containing alcohol dehydrogenase family. Class-III subfamily. In terms of assembly, homodimer. Zn(2+) serves as cofactor.

Its subcellular location is the cytoplasm. The enzyme catalyses a primary alcohol + NAD(+) = an aldehyde + NADH + H(+). It carries out the reaction a secondary alcohol + NAD(+) = a ketone + NADH + H(+). The catalysed reaction is S-(hydroxymethyl)glutathione + NADP(+) = S-formylglutathione + NADPH + H(+). It catalyses the reaction S-(hydroxymethyl)glutathione + NAD(+) = S-formylglutathione + NADH + H(+). The enzyme catalyses 20-oxo-(5Z,8Z,11Z,14Z)-eicosatetraenoate + NAD(+) + H2O = (5Z,8Z,11Z,14Z)-eicosatetraenedioate + NADH + 2 H(+). It carries out the reaction 20-hydroxy-(5Z,8Z,11Z,14Z)-eicosatetraenoate + NAD(+) = 20-oxo-(5Z,8Z,11Z,14Z)-eicosatetraenoate + NADH + H(+). The catalysed reaction is S-nitrosoglutathione + NADH + H(+) = S-(hydroxysulfenamide)glutathione + NAD(+). Catalyzes the oxidation of long-chain primary alcohols and the oxidation of S-(hydroxymethyl) glutathione. Also oxidizes long chain omega-hydroxy fatty acids, such as 20-HETE, producing both the intermediate aldehyde, 20-oxoarachidonate and the end product, a dicarboxylic acid, (5Z,8Z,11Z,14Z)-eicosatetraenedioate. Class-III ADH is remarkably ineffective in oxidizing ethanol. Required for clearance of cellular formaldehyde, a cytotoxic and carcinogenic metabolite that induces DNA damage. Also acts as a S-nitroso-glutathione reductase by catalyzing the NADH-dependent reduction of S-nitrosoglutathione, thereby regulating protein S-nitrosylation. This chain is Alcohol dehydrogenase class-3, found in Homo sapiens (Human).